Reading from the N-terminus, the 131-residue chain is Holo-[acyl-carrier-protein] synthase (131 aa).

Asp-8 and Glu-59 together coordinate Mg(2+).

The protein belongs to the P-Pant transferase superfamily. AcpS family. The cofactor is Mg(2+).

It is found in the cytoplasm. It carries out the reaction apo-[ACP] + CoA = holo-[ACP] + adenosine 3',5'-bisphosphate + H(+). In terms of biological role, transfers the 4'-phosphopantetheine moiety from coenzyme A to a Ser of acyl-carrier-protein. This is Holo-[acyl-carrier-protein] synthase from Rickettsia conorii (strain ATCC VR-613 / Malish 7).